The primary structure comprises 231 residues: Lipoprotein-releasing system ATP-binding protein LolD (231 aa).

One can recognise an ABC transporter domain in the interval 11–231 (LRLEGLTRRF…TLRDGKLVPF (221 aa)). Residue 47-54 (APSGTGKS) participates in ATP binding.

The protein belongs to the ABC transporter superfamily. Lipoprotein translocase (TC 3.A.1.125) family. As to quaternary structure, the complex is composed of two ATP-binding proteins (LolD) and two transmembrane proteins (LolC and LolE).

The protein resides in the cell inner membrane. Its function is as follows. Part of the ABC transporter complex LolCDE involved in the translocation of mature outer membrane-directed lipoproteins, from the inner membrane to the periplasmic chaperone, LolA. Responsible for the formation of the LolA-lipoprotein complex in an ATP-dependent manner. The polypeptide is Lipoprotein-releasing system ATP-binding protein LolD (Gluconobacter oxydans (strain 621H) (Gluconobacter suboxydans)).